The primary structure comprises 206 residues: ATP-dependent dethiobiotin synthetase BioD (206 aa).

12–17 (GVGKTI) serves as a coordination point for ATP. Thr16 lines the Mg(2+) pocket. Lys32 is an active-site residue. Mg(2+)-binding residues include His46 and Glu98. 98-101 (EGAG) contacts ATP.

This sequence belongs to the dethiobiotin synthetase family. Homodimer. Requires Mg(2+) as cofactor.

It is found in the cytoplasm. The catalysed reaction is (7R,8S)-7,8-diammoniononanoate + CO2 + ATP = (4R,5S)-dethiobiotin + ADP + phosphate + 3 H(+). It functions in the pathway cofactor biosynthesis; biotin biosynthesis; biotin from 7,8-diaminononanoate: step 1/2. Catalyzes a mechanistically unusual reaction, the ATP-dependent insertion of CO2 between the N7 and N8 nitrogen atoms of 7,8-diaminopelargonic acid (DAPA, also called 7,8-diammoniononanoate) to form a ureido ring. The chain is ATP-dependent dethiobiotin synthetase BioD from Novosphingobium aromaticivorans (strain ATCC 700278 / DSM 12444 / CCUG 56034 / CIP 105152 / NBRC 16084 / F199).